A 280-amino-acid chain; its full sequence is Bifunctional protein FolD (280 aa).

Residues 166 to 168 (GRS) and serine 191 each bind NADP(+).

This sequence belongs to the tetrahydrofolate dehydrogenase/cyclohydrolase family. As to quaternary structure, homodimer.

The enzyme catalyses (6R)-5,10-methylene-5,6,7,8-tetrahydrofolate + NADP(+) = (6R)-5,10-methenyltetrahydrofolate + NADPH. It carries out the reaction (6R)-5,10-methenyltetrahydrofolate + H2O = (6R)-10-formyltetrahydrofolate + H(+). It functions in the pathway one-carbon metabolism; tetrahydrofolate interconversion. Its function is as follows. Catalyzes the oxidation of 5,10-methylenetetrahydrofolate to 5,10-methenyltetrahydrofolate and then the hydrolysis of 5,10-methenyltetrahydrofolate to 10-formyltetrahydrofolate. The sequence is that of Bifunctional protein FolD from Cellvibrio japonicus (strain Ueda107) (Pseudomonas fluorescens subsp. cellulosa).